The chain runs to 312 residues: Ribonuclease HIII (312 aa).

The 217-residue stretch at Phe-95 to Pro-311 folds into the RNase H type-2 domain. Asp-101, Glu-102, and Asp-206 together coordinate a divalent metal cation.

It belongs to the RNase HII family. RnhC subfamily. Requires Mn(2+) as cofactor. It depends on Mg(2+) as a cofactor.

Its subcellular location is the cytoplasm. It catalyses the reaction Endonucleolytic cleavage to 5'-phosphomonoester.. Endonuclease that specifically degrades the RNA of RNA-DNA hybrids. This is Ribonuclease HIII from Staphylococcus aureus (strain USA300).